The sequence spans 140 residues: Large ribosomal subunit protein uL3 (140 aa).

Belongs to the universal ribosomal protein uL3 family. As to quaternary structure, part of the 50S ribosomal subunit. Forms a cluster with proteins L14 and L19.

Functionally, one of the primary rRNA binding proteins, it binds directly near the 3'-end of the 23S rRNA, where it nucleates assembly of the 50S subunit. This chain is Large ribosomal subunit protein uL3 (rplC), found in Planobispora rosea.